Reading from the N-terminus, the 596-residue chain is Proton channel OTOP3 (596 aa).

The segment covering 1 to 21 (MGRGARAAAAQSRWGRASRAS) has biased composition (low complexity). The disordered stretch occupies residues 1–59 (MGRGARAAAAQSRWGRASRASVSPGRTIRSAPAVGEAQETEAAPEKENRVDVGAEERAA). Residues 1–88 (MGRGARAAAA…RDRQAQKAGQ (88 aa)) are Cytoplasmic-facing. Ser21 and Ser23 each carry phosphoserine. A compositionally biased stretch (basic and acidic residues) spans 43 to 59 (APEKENRVDVGAEERAA). A helical membrane pass occupies residues 89 to 109 (LFSGLLALNVVFLGGAFICSM). At 110–119 (IFNKVAVTLG) the chain is on the extracellular side. A helical membrane pass occupies residues 120–143 (DVWILLATLKVLSLLWLLYYVAST). Residues 144–159 (TRRPHAVLYQDPHAGP) lie on the Cytoplasmic side of the membrane. A helical membrane pass occupies residues 160–181 (LWVRGSLVLFGSCTFCLNIFRV). Over 182–193 (GYDVSHIRCKSQ) the chain is Extracellular. Residues 194–217 (LDLVFSVIEMVFIGVQTWVLWKHC) traverse the membrane as a helical segment. Residues 218 to 225 (KDCVRVQT) are Cytoplasmic-facing. The helical transmembrane segment at 226–248 (NFTRCGLMLTLATNLLLWVLAVT) threads the bilayer. The Extracellular segment spans residues 249–295 (NDSMHREIEAELGILMEKSTGNETNTCLCLNATACEAFRRGFLMLYP). The chain crosses the membrane as a helical span at residues 296–312 (FSTEYCLICCAVLFVMW). Topologically, residues 313–338 (KNVGRHVAPHMGAHPATAPFHLHGAI) are cytoplasmic. Residues 339–358 (FGPLLGLLVLLAGVCVFVLF) traverse the membrane as a helical segment. The Extracellular portion of the chain corresponds to 359–372 (QIEASGPAIACQYF). Residues 373–395 (TLYYAFYVAVLPTMSLACLAGTA) traverse the membrane as a helical segment. The Cytoplasmic segment spans residues 396-413 (IHGLEERELDTVKNPTRS). A helical transmembrane segment spans residues 414–435 (LDVVLLMGAALGQMGIAYFSIV). Residues 436–446 (AIVAKRPHELL) lie on the Extracellular side of the membrane. Residues 447–469 (NRLILAYSLLLILQHIAQNLFII) traverse the membrane as a helical segment. The Cytoplasmic segment spans residues 470–529 (EGLHRRPLWETVPEGLAGKQEAEPPRRGSLLELGQGLQRASLAYIHSYSHLNWKRRALKE). The chain crosses the membrane as a helical span at residues 530 to 547 (ISLFLILCNITLWMMPAF). The Extracellular segment spans residues 548–566 (GIHPEFENGLEKDFYGYQI). The helical transmembrane segment at 567–589 (WFAIVNFGLPLGVFYRMHSVGGL) threads the bilayer. Residues 590-596 (VEVYLGA) are Cytoplasmic-facing.

It belongs to the otopetrin family. In terms of assembly, homodimer.

It localises to the cell membrane. It catalyses the reaction H(+)(in) = H(+)(out). Its activity is regulated as follows. Activated by extracellular acidification. Activated by Zn(2+) under non-acidic conditions. Its function is as follows. Proton-selective channel gated by extracellular protons. The sequence is that of Proton channel OTOP3 from Homo sapiens (Human).